A 427-amino-acid polypeptide reads, in one-letter code: Acyl-lipid 8-desaturase (427 aa).

Residues 1–24 (MGRGGDSSGQAHPAAELAVPSDRA) form a disordered region. Residues 36–84 (IVLYGKRVDVTKFQRTHPGGSKVFRIFQDRDATEQFESYHSKRAIKMME) form the Cytochrome b5 heme-binding domain. Residues histidine 52 and histidine 75 each contribute to the heme site. The Histidine box-1 motif lies at 178 to 182 (HSVFK). Residues 189–209 (VGWNNAAGYFLGFVQGYAVEW) form a helical membrane-spanning segment. Positions 213 to 218 (RHNTHH) match the Histidine box-2 motif. 2 helical membrane passes run 261–281 (VPVM…YVAM) and 286–306 (MLPQ…VFAG). A Histidine box-3 motif is present at residues 373–377 (QTEHH).

The protein belongs to the fatty acid desaturase type 1 family. Requires Fe(2+) as cofactor.

It is found in the membrane. Fatty acid desaturase that introduces a cis double bond at the 8-position in 20-carbon polyunsaturated fatty acids incorporated in a glycerolipid that contain a Delta(8) double bond to yield (20:4(8,11,14,17)). This Rebecca salina (Marine microalga) protein is Acyl-lipid 8-desaturase.